The primary structure comprises 24 residues: Brevinin-1Bf (24 aa).

A disulfide bridge connects residues Cys-18 and Cys-24.

As to expression, expressed by the skin glands.

The protein localises to the secreted. Functionally, antibacterial activity against Gram-positive bacterium S.aureus and Gram-negative bacterium E.coli. The polypeptide is Brevinin-1Bf (Lithobates berlandieri (Rio Grande leopard frog)).